We begin with the raw amino-acid sequence, 220 residues long: Large ribosomal subunit protein bL21c (220 aa).

The protein belongs to the bacterial ribosomal protein bL21 family. In terms of assembly, part of the 50S ribosomal subunit.

It is found in the plastid. The protein resides in the chloroplast. Functionally, this protein binds to 23S ribosomal RNA in the presence of protein L20. The sequence is that of Large ribosomal subunit protein bL21c (RPL21) from Arabidopsis thaliana (Mouse-ear cress).